A 50-amino-acid chain; its full sequence is Large ribosomal subunit protein bL33A (50 aa).

The protein belongs to the bacterial ribosomal protein bL33 family.

The sequence is that of Large ribosomal subunit protein bL33A (rpmG1) from Mycoplasmopsis pulmonis (strain UAB CTIP) (Mycoplasma pulmonis).